The following is a 161-amino-acid chain: Beta-lactoglobulin-2 (161 aa).

2 cysteine pairs are disulfide-bonded: Cys-66–Cys-159 and Cys-106–Cys-119.

Belongs to the calycin superfamily. Lipocalin family. In terms of assembly, monomer. As to expression, synthesized in mammary gland and secreted in milk.

The protein resides in the secreted. Its function is as follows. Primary component of whey, it binds retinol and is probably involved in the transport of that molecule. The polypeptide is Beta-lactoglobulin-2 (LGB2) (Canis lupus familiaris (Dog)).